A 349-amino-acid polypeptide reads, in one-letter code: tRNA pseudouridine synthase D (349 aa).

Substrate is bound at residue phenylalanine 27. Aspartate 80 acts as the Nucleophile in catalysis. Residue asparagine 129 coordinates substrate. Residues 155–303 (GVPNYFGAQR…VEAARRAMLL (149 aa)) form the TRUD domain. Position 329 (phenylalanine 329) interacts with substrate.

The protein belongs to the pseudouridine synthase TruD family.

The enzyme catalyses uridine(13) in tRNA = pseudouridine(13) in tRNA. Its function is as follows. Responsible for synthesis of pseudouridine from uracil-13 in transfer RNAs. The polypeptide is tRNA pseudouridine synthase D (Escherichia coli (strain K12 / MC4100 / BW2952)).